The primary structure comprises 490 residues: Adenylyltransferase and sulfurtransferase uba4 (490 aa).

Residues 33–54 (EAAKTPPYSDSTETDRGSSSST) are disordered. Residues Gly-96, Asp-117, 124–128 (SNLHR), Lys-141, and 185–186 (DH) contribute to the ATP site. Cys-234 and Cys-237 together coordinate Zn(2+). The active-site Glycyl thioester intermediate; for adenylyltransferase activity is Cys-251. Positions 323 and 326 each coordinate Zn(2+). Positions 379 to 488 (EHGKPVLLDV…WKREVDSTLP (110 aa)) constitute a Rhodanese domain. Cys-443 serves as the catalytic Cysteine persulfide intermediate; for sulfurtransferase activity.

It in the N-terminal section; belongs to the HesA/MoeB/ThiF family. UBA4 subfamily. The cofactor is Zn(2+).

It is found in the cytoplasm. The protein localises to the cytosol. It catalyses the reaction [molybdopterin-synthase sulfur-carrier protein]-C-terminal Gly-Gly + ATP + H(+) = [molybdopterin-synthase sulfur-carrier protein]-C-terminal Gly-Gly-AMP + diphosphate. The catalysed reaction is [molybdopterin-synthase sulfur-carrier protein]-C-terminal Gly-Gly-AMP + S-sulfanyl-L-cysteinyl-[cysteine desulfurase] + AH2 = [molybdopterin-synthase sulfur-carrier protein]-C-terminal-Gly-aminoethanethioate + L-cysteinyl-[cysteine desulfurase] + A + AMP + 2 H(+). The protein operates within tRNA modification; 5-methoxycarbonylmethyl-2-thiouridine-tRNA biosynthesis. Its function is as follows. Plays a central role in 2-thiolation of mcm(5)S(2)U at tRNA wobble positions of cytosolic tRNA(Lys), tRNA(Glu) and tRNA(Gln). Also essential during biosynthesis of the molybdenum cofactor. Acts by mediating the C-terminal thiocarboxylation of sulfur carriers URM1 and MOCS2A. Its N-terminus first activates urm1 and MOCS2A as acyl-adenylates (-COAMP), then the persulfide sulfur on the catalytic cysteine is transferred to URM1 and MOCS2A to form thiocarboxylation (-COSH) of their C-terminus. The reaction probably involves hydrogen sulfide that is generated from the persulfide intermediate and that acts as a nucleophile towards URM1 and MOCS2A. Subsequently, a transient disulfide bond is formed. Does not use thiosulfate as sulfur donor; NFS1 probably acting as a sulfur donor for thiocarboxylation reactions. The polypeptide is Adenylyltransferase and sulfurtransferase uba4 (Pyricularia oryzae (strain 70-15 / ATCC MYA-4617 / FGSC 8958) (Rice blast fungus)).